A 303-amino-acid polypeptide reads, in one-letter code: Oxygen-dependent coproporphyrinogen-III oxidase (303 aa).

Substrate is bound at residue serine 93. A divalent metal cation-binding residues include histidine 97 and histidine 107. The active-site Proton donor is histidine 107. Substrate is bound at residue 109–111 (NVR). Residues histidine 149 and histidine 179 each contribute to the a divalent metal cation site. Residues 244–279 (YVEFNLVFDRGTLFGLQSGGRTESILLSMPPLAQWR) are important for dimerization. Substrate is bound at residue 262 to 264 (GGR).

It belongs to the aerobic coproporphyrinogen-III oxidase family. In terms of assembly, homodimer. It depends on a divalent metal cation as a cofactor.

Its subcellular location is the cytoplasm. It carries out the reaction coproporphyrinogen III + O2 + 2 H(+) = protoporphyrinogen IX + 2 CO2 + 2 H2O. Its pathway is porphyrin-containing compound metabolism; protoporphyrin-IX biosynthesis; protoporphyrinogen-IX from coproporphyrinogen-III (O2 route): step 1/1. Its function is as follows. Involved in the heme biosynthesis. Catalyzes the aerobic oxidative decarboxylation of propionate groups of rings A and B of coproporphyrinogen-III to yield the vinyl groups in protoporphyrinogen-IX. This Bordetella parapertussis (strain 12822 / ATCC BAA-587 / NCTC 13253) protein is Oxygen-dependent coproporphyrinogen-III oxidase.